A 272-amino-acid polypeptide reads, in one-letter code: Cytosolic Fe-S cluster assembly factor NUBP2 (272 aa).

An ATP-binding site is contributed by 23 to 30 (GKGGVGKS). Residues Cys197 and Cys200 each contribute to the [4Fe-4S] cluster site.

Belongs to the Mrp/NBP35 ATP-binding proteins family. NUBP2/CFD1 subfamily. As to quaternary structure, heterotetramer of 2 NUBP1 and 2 NUBP2 chains. It depends on [4Fe-4S] cluster as a cofactor.

The protein localises to the cytoplasm. In terms of biological role, component of the cytosolic iron-sulfur (Fe/S) protein assembly (CIA) machinery. Required for maturation of extramitochondrial Fe-S proteins. The NUBP1-NUBP2 heterotetramer forms a Fe-S scaffold complex, mediating the de novo assembly of an Fe-S cluster and its transfer to target apoproteins. The chain is Cytosolic Fe-S cluster assembly factor NUBP2 from Gallus gallus (Chicken).